Reading from the N-terminus, the 273-residue chain is Diaminopimelate epimerase (273 aa).

2 residues coordinate substrate: N11 and N60. Catalysis depends on C69, which acts as the Proton donor. Substrate contacts are provided by residues 70 to 71 (GN), N181, and 199 to 200 (ER). The active-site Proton acceptor is C209. 210–211 (GT) serves as a coordination point for substrate.

Belongs to the diaminopimelate epimerase family. Homodimer.

The protein localises to the cytoplasm. The enzyme catalyses (2S,6S)-2,6-diaminopimelate = meso-2,6-diaminopimelate. It functions in the pathway amino-acid biosynthesis; L-lysine biosynthesis via DAP pathway; DL-2,6-diaminopimelate from LL-2,6-diaminopimelate: step 1/1. Functionally, catalyzes the stereoinversion of LL-2,6-diaminopimelate (L,L-DAP) to meso-diaminopimelate (meso-DAP), a precursor of L-lysine and an essential component of the bacterial peptidoglycan. The chain is Diaminopimelate epimerase from Helicobacter pylori (strain ATCC 700392 / 26695) (Campylobacter pylori).